A 148-amino-acid polypeptide reads, in one-letter code: Protein NrdI (148 aa).

This sequence belongs to the NrdI family.

Its function is as follows. Probably involved in ribonucleotide reductase function. The chain is Protein NrdI from Corynebacterium glutamicum (strain R).